The following is a 293-amino-acid chain: Ribosomal protein L11 methyltransferase (293 aa).

S-adenosyl-L-methionine contacts are provided by Thr145, Gly166, Asp188, and Asn230.

This sequence belongs to the methyltransferase superfamily. PrmA family.

It localises to the cytoplasm. It carries out the reaction L-lysyl-[protein] + 3 S-adenosyl-L-methionine = N(6),N(6),N(6)-trimethyl-L-lysyl-[protein] + 3 S-adenosyl-L-homocysteine + 3 H(+). Functionally, methylates ribosomal protein L11. This Shewanella woodyi (strain ATCC 51908 / MS32) protein is Ribosomal protein L11 methyltransferase.